Here is a 606-residue protein sequence, read N- to C-terminus: Albumin A (606 aa).

Positions 1–18 (MKWITLICLLISSTLIES) are cleaved as a signal peptide. The propeptide occupies 19-24 (RIIFKR). Albumin domains lie at 22-211 (FKRD…ELMK), 212-401 (HSHS…RFMN), and 402-599 (EAKE…VLIE). His-30 contacts Cu cation. Intrachain disulfides connect Cys-80-Cys-89, Cys-102-Cys-118, Cys-117-Cys-128, Cys-148-Cys-193, Cys-192-Cys-201, Cys-224-Cys-270, Cys-269-Cys-277, Cys-289-Cys-303, Cys-302-Cys-313, Cys-340-Cys-383, Cys-382-Cys-391, Cys-414-Cys-460, Cys-459-Cys-470, Cys-483-Cys-499, Cys-498-Cys-509, Cys-536-Cys-581, and Cys-580-Cys-589.

It belongs to the ALB/AFP/VDB family. As to expression, plasma.

The protein localises to the secreted. Binds water, Ca(2+), Na(+), K(+), fatty acids, hormones, bilirubin and drugs. Its main function is the regulation of the colloidal osmotic pressure of blood. In Xenopus laevis (African clawed frog), this protein is Albumin A (alb-a).